A 543-amino-acid polypeptide reads, in one-letter code: ATP synthase subunit alpha (543 aa).

174–181 (GDRQTGKT) provides a ligand contact to ATP.

The protein belongs to the ATPase alpha/beta chains family. In terms of assembly, F-type ATPases have 2 components, CF(1) - the catalytic core - and CF(0) - the membrane proton channel. CF(1) has five subunits: alpha(3), beta(3), gamma(1), delta(1), epsilon(1). CF(0) has three main subunits: a(1), b(2) and c(9-12). The alpha and beta chains form an alternating ring which encloses part of the gamma chain. CF(1) is attached to CF(0) by a central stalk formed by the gamma and epsilon chains, while a peripheral stalk is formed by the delta and b chains.

The protein resides in the cell membrane. The enzyme catalyses ATP + H2O + 4 H(+)(in) = ADP + phosphate + 5 H(+)(out). In terms of biological role, produces ATP from ADP in the presence of a proton gradient across the membrane. The alpha chain is a regulatory subunit. The sequence is that of ATP synthase subunit alpha from Bifidobacterium longum subsp. infantis (strain ATCC 15697 / DSM 20088 / JCM 1222 / NCTC 11817 / S12).